A 310-amino-acid chain; its full sequence is Probable RuBisCO transcriptional regulator (310 aa).

Positions 6 to 63 (FTLDQLRILKAIASEGSFKKAAESLYISQPAVSLQIQNLEKQLNIPIFDRANRKAVFT) constitute an HTH lysR-type domain. The H-T-H motif DNA-binding region spans 23 to 42 (FKKAAESLYISQPAVSLQIQ).

The protein belongs to the LysR transcriptional regulatory family.

The protein localises to the plastid. Its subcellular location is the chloroplast. Functionally, trans-acting transcriptional regulator of RuBisCO genes (rbcL and rbcS) expression. The sequence is that of Probable RuBisCO transcriptional regulator (rbcR) from Guillardia theta (Cryptophyte).